We begin with the raw amino-acid sequence, 221 residues long: Epididymal secretory glutathione peroxidase (221 aa).

Residues 1–21 form the signal peptide; it reads MTTQLRVVHLLPLLLACFVQT. Cys73 is an active-site residue.

The protein belongs to the glutathione peroxidase family. As to expression, epididymis.

The protein localises to the secreted. It catalyses the reaction 2 glutathione + H2O2 = glutathione disulfide + 2 H2O. Functionally, protects cells and enzymes from oxidative damage, by catalyzing the reduction of hydrogen peroxide, lipid peroxides and organic hydroperoxide, by glutathione. May constitute a glutathione peroxidase-like protective system against peroxide damage in sperm membrane lipids. This chain is Epididymal secretory glutathione peroxidase (GPX5), found in Macaca fascicularis (Crab-eating macaque).